A 314-amino-acid polypeptide reads, in one-letter code: Zinc transporter ZIP3 (314 aa).

Residues M1–K3 lie on the Extracellular side of the membrane. A helical membrane pass occupies residues L4 to L24. The Cytoplasmic portion of the chain corresponds to L25–K42. The chain crosses the membrane as a helical span at residues I43–L63. Topologically, residues L64–P85 are extracellular. A helical membrane pass occupies residues L86 to L106. The Cytoplasmic portion of the chain corresponds to T107–R169. Phosphoserine is present on residues S125 and S129. The chain crosses the membrane as a helical span at residues L170–L190. Topologically, residues Q191 to K196 are extracellular. The helical transmembrane segment at V197–I217 threads the bilayer. Over S218–A229 the chain is Cytoplasmic. The helical transmembrane segment at A230–I250 threads the bilayer. Residues E251–S262 are Extracellular-facing. The helical transmembrane segment at V263 to A283 threads the bilayer. Residues K284–R292 lie on the Cytoplasmic side of the membrane. A helical membrane pass occupies residues L293 to K313. A topological domain (extracellular) is located at residue W314.

The protein belongs to the ZIP transporter (TC 2.A.5) family.

It localises to the cell membrane. It is found in the apical cell membrane. It catalyses the reaction Zn(2+)(in) = Zn(2+)(out). Transporter for the divalent cation Zn(2+). Mediates the influx of Zn(2+) into cells from extracellular space. Controls Zn(2+) accumulation into dentate gyrus granule cells in the hippocampus. Mediates Zn(2+) reuptake from the secreted milk within the alveolar lumen. In Homo sapiens (Human), this protein is Zinc transporter ZIP3.